Consider the following 146-residue polypeptide: Cysteine protease inhibitor 3 (146 aa).

2 disulfide bridges follow: cysteine 8/cysteine 60 and cysteine 109/cysteine 115.

The protein belongs to the protease inhibitor I3 (leguminous Kunitz-type inhibitor) family.

It localises to the vacuole. Functionally, inhibitor of cysteine proteases. May protect the plant by inhibiting proteases of invading organisms. The protein is Cysteine protease inhibitor 3 of Solanum tuberosum (Potato).